A 101-amino-acid polypeptide reads, in one-letter code: Ubiquitin-related modifier 1 (101 aa).

G101 is subject to 1-thioglycine. G101 participates in a covalent cross-link: Glycyl lysine isopeptide (Gly-Lys) (interchain with K-? in acceptor proteins).

The protein belongs to the URM1 family. In terms of assembly, component of a complex at least composed of URM1, CTU2/NCS2 and CTU1/ATPBD3. Post-translationally, C-terminal thiocarboxylation occurs in 2 steps, it is first acyl-adenylated (-COAMP) via the hesA/moeB/thiF part of MOCS3, then thiocarboxylated (-COSH) via the rhodanese domain of MOCS3.

The protein localises to the cytoplasm. It functions in the pathway tRNA modification; 5-methoxycarbonylmethyl-2-thiouridine-tRNA biosynthesis. In terms of biological role, acts as a sulfur carrier required for 2-thiolation of mcm(5)S(2)U at tRNA wobble positions of cytosolic tRNA(Lys), tRNA(Glu) and tRNA(Gln). Serves as sulfur donor in tRNA 2-thiolation reaction by being thiocarboxylated (-COSH) at its C-terminus by MOCS3. The sulfur is then transferred to tRNA to form 2-thiolation of mcm(5)S(2)U. Also acts as a ubiquitin-like protein (UBL) that is covalently conjugated via an isopeptide bond to lysine residues of target proteins such as MOCS3, ATPBD3, CTU2, USP15 and CAS. The thiocarboxylated form serves as substrate for conjugation and oxidative stress specifically induces the formation of UBL-protein conjugates. The chain is Ubiquitin-related modifier 1 from Homo sapiens (Human).